We begin with the raw amino-acid sequence, 298 residues long: Oxidoreductase YdhF (298 aa).

Tyr-55 acts as the Proton donor in catalysis. Residues 158–159, 209–220, and 263–264 contribute to the NADP(+) site; these read SN, WSCLGGGRLFND, and SG.

Belongs to the aldo/keto reductase family. Aldo/keto reductase 2 subfamily.

Its function is as follows. May function as oxidoreductase. In Escherichia coli (strain K12), this protein is Oxidoreductase YdhF (ydhF).